The chain runs to 302 residues: MHIGILSRNRRLYSTRRLVEAAEARGHTARVVDTLRCYMNIASHRPSIHYKGEEIEPFDAIVPRIGASVTFYGCAVLRQFEMMSTYVLNDSVSITRSRDKLRSLQLLSRKGLGLPVTGFAHSPDDIPDLITMVKGAPLVIKLLEGTQGIGVVLAETNQAAESVIQAFMGMKANIMVQEYIKEAKGADVRCLVIGDKVVAAMKRQAAEGEFRSNLHRGGTASVIRITPEERSTAIRAAKAMGLRIAGVDLLRSNHGPVIMEVNSSPGLQGIETATGKDIAGQIIEYIEKNASTPRKAPPKPKG.

An ATP-grasp domain is found at 104–287 (LQLLSRKGLG…IAGQIIEYIE (184 aa)). ATP-binding positions include lysine 141, 178–179 (EY), aspartate 187, and 211–213 (RSN). The Mg(2+) site is built by aspartate 248, glutamate 260, and asparagine 262. Mn(2+) is bound by residues aspartate 248, glutamate 260, and asparagine 262.

It belongs to the RimK family. Requires Mg(2+) as cofactor. Mn(2+) is required as a cofactor.

The protein is Probable alpha-L-glutamate ligase of Chromohalobacter salexigens (strain ATCC BAA-138 / DSM 3043 / CIP 106854 / NCIMB 13768 / 1H11).